The chain runs to 308 residues: Tyramine--L-glutamate ligase (308 aa).

Residues 89-291 (KSLLKSENID…LAELLIKNAN (203 aa)) enclose the ATP-grasp domain. An ATP-binding site is contributed by 115–192 (TKIIESYPVK…QEFIDGENLS (78 aa)). Mg(2+) is bound by residues Asp-252, Glu-264, and Asn-266. Mn(2+) is bound by residues Asp-252, Glu-264, and Asn-266.

Mg(2+) serves as cofactor. It depends on Mn(2+) as a cofactor.

It catalyses the reaction tyramine + L-glutamate + ATP = gamma-L-glutamyltyramine + ADP + phosphate + H(+). It functions in the pathway cofactor biosynthesis; methanofuran biosynthesis. Catalyzes the formation of an amide bond between tyramine and the gamma carboxy group of L-glutamate. The enzyme also accepts phenylethylamine in vitro. In Methanocaldococcus jannaschii (strain ATCC 43067 / DSM 2661 / JAL-1 / JCM 10045 / NBRC 100440) (Methanococcus jannaschii), this protein is Tyramine--L-glutamate ligase (mfnD).